Reading from the N-terminus, the 686-residue chain is Myb-related protein B (686 aa).

The tract at residues 1–28 is disordered; that stretch reads MARRSRGEDQDELHCQDTDSDVPEQRDG. 3 HTH myb-type domains span residues 26 to 77, 78 to 133, and 134 to 184; these read RDGR…LRVL, NPDL…NPEV, and KKSS…KRKV. 3 DNA-binding regions (H-T-H motif) span residues 54-77, 106-129, and 157-180; these read WKFL…LRVL, WTLI…HNHL, and WAEI…NSTI. 2 disordered regions span residues 315-355 and 493-512; these read CDLT…VTEY and YVVD…LEKY. Over residues 326–343 the composition is skewed to low complexity; sequence PSAGSSSSSNSPVRQTPS.

In terms of assembly, component of the DREAM complex. As to expression, expressed in hematopoietic and non hematopoietic cells.

It is found in the nucleus. Represses v-myb- and c-myb-mediated activation of the mim-1 gene, probably by competing with other myb proteins for binding sites. It is an inhibitory member of the myb family. The polypeptide is Myb-related protein B (MYBL2) (Gallus gallus (Chicken)).